The following is a 179-amino-acid chain: Nicotinamide-nucleotide adenylyltransferase (179 aa).

This sequence belongs to the archaeal NMN adenylyltransferase family.

Its subcellular location is the cytoplasm. It catalyses the reaction beta-nicotinamide D-ribonucleotide + ATP + H(+) = diphosphate + NAD(+). Its pathway is cofactor biosynthesis; NAD(+) biosynthesis; NAD(+) from nicotinamide D-ribonucleotide: step 1/1. The protein is Nicotinamide-nucleotide adenylyltransferase of Thermoplasma acidophilum (strain ATCC 25905 / DSM 1728 / JCM 9062 / NBRC 15155 / AMRC-C165).